Reading from the N-terminus, the 274-residue chain is Thymidylate synthase (274 aa).

Arg21 is a binding site for dUMP. (6R)-5,10-methylene-5,6,7,8-tetrahydrofolate is bound at residue His51. Arg123 to Arg124 serves as a coordination point for dUMP. Cys156 functions as the Nucleophile in the catalytic mechanism. DUMP-binding positions include Arg176–Asp179, Asn187, and His217–Tyr219. Asp179 lines the (6R)-5,10-methylene-5,6,7,8-tetrahydrofolate pocket. Residue Ser273 participates in (6R)-5,10-methylene-5,6,7,8-tetrahydrofolate binding.

It belongs to the thymidylate synthase family. Bacterial-type ThyA subfamily. As to quaternary structure, homodimer.

Its subcellular location is the cytoplasm. It carries out the reaction dUMP + (6R)-5,10-methylene-5,6,7,8-tetrahydrofolate = 7,8-dihydrofolate + dTMP. The protein operates within pyrimidine metabolism; dTTP biosynthesis. In terms of biological role, catalyzes the reductive methylation of 2'-deoxyuridine-5'-monophosphate (dUMP) to 2'-deoxythymidine-5'-monophosphate (dTMP) while utilizing 5,10-methylenetetrahydrofolate (mTHF) as the methyl donor and reductant in the reaction, yielding dihydrofolate (DHF) as a by-product. This enzymatic reaction provides an intracellular de novo source of dTMP, an essential precursor for DNA biosynthesis. In Francisella tularensis subsp. holarctica (strain FTNF002-00 / FTA), this protein is Thymidylate synthase.